A 268-amino-acid chain; its full sequence is Tryptophan synthase alpha chain (268 aa).

Catalysis depends on proton acceptor residues glutamate 49 and aspartate 60.

Belongs to the TrpA family. In terms of assembly, tetramer of two alpha and two beta chains.

The catalysed reaction is (1S,2R)-1-C-(indol-3-yl)glycerol 3-phosphate + L-serine = D-glyceraldehyde 3-phosphate + L-tryptophan + H2O. It functions in the pathway amino-acid biosynthesis; L-tryptophan biosynthesis; L-tryptophan from chorismate: step 5/5. Its function is as follows. The alpha subunit is responsible for the aldol cleavage of indoleglycerol phosphate to indole and glyceraldehyde 3-phosphate. This is Tryptophan synthase alpha chain from Sodalis glossinidius (strain morsitans).